The sequence spans 452 residues: uncharacterized protein (452 aa).

14 helical membrane-spanning segments follow: residues 8-28 (AVFLTAVASGTMLNPLNSSMI), 39-59 (FHLSFTTVSWLISSFYLASAV), 77-97 (FLFGLILVAVSAIGAPFAPTF), 100-122 (LLVMRLFQSVGSSAIYPSGVGLI), 134-156 (LAVLSIFASAMTALGPTAGGFLI), 161-183 (WPAIFIVNLPFIILSFLLGLYMF), 203-222 (LGIVLFAGGIIFLLSFLLSF), 226-243 (PHAVEGVLGLLLLCAFVW), 266-286 (AVYVQFILLNVFFYCLFFGLP), 302-322 (LFMLFMSGMSIVVSPLTGKWI), 330-350 (PIFAGALLMTAGAVLLTIFFI), 359-379 (LILSLLGIGYGLGNVALQAAM), 393-415 (GLFQTCRYLGSILSSVILGILFG), and 425-447 (MMGIIMIIAGGASLLMAVRFAAL).

This sequence belongs to the major facilitator superfamily.

The protein resides in the cell membrane. This is an uncharacterized protein from Bacillus subtilis (strain 168).